A 1307-amino-acid chain; its full sequence is Contactin-associated protein like 5-3 (1307 aa).

A signal peptide spans 1–24 (MDFVPRLNSVLTLVLSGLWHFGLT). Over 25 to 1238 (ATNCDNCDDP…PLTNAVLSDS (1214 aa)) the chain is Extracellular. In terms of domain architecture, F5/8 type C spans 31 to 175 (CDDPLASFLS…IGMRMEVYGC (145 aa)). Residues Cys31 and Cys175 are joined by a disulfide bond. Laminin G-like domains follow at residues 181-361 (VADF…TFSC) and 368-545 (PITF…IDLC). Residue Asn283 is glycosylated (N-linked (GlcNAc...) asparagine). Cysteines 330 and 361 form a disulfide. N-linked (GlcNAc...) asparagine glycosylation occurs at Asn497. 4 disulfide bridges follow: Cys513–Cys545, Cys551–Cys562, Cys556–Cys571, and Cys573–Cys583. One can recognise an EGF-like 1 domain in the interval 547–584 (IKDRCLPNYCEHGGHCVQTWTTFYCNCSNTGYTGATCH). Positions 585–792 (DSIYEQSCEV…LRCYGDRHFW (208 aa)) constitute a Fibrinogen C-terminal domain. N-linked (GlcNAc...) asparagine glycosylation is found at Asn600, Asn624, and Asn637. Residues 793-958 (NAVSFSTEAS…MVTSGVRPGC (166 aa)) enclose the Laminin G-like 3 domain. 5 cysteine pairs are disulfide-bonded: Cys931/Cys958, Cys962/Cys975, Cys969/Cys984, Cys986/Cys996, and Cys1165/Cys1200. The EGF-like 2 domain occupies 959–997 (PGHCSSYGNNCHNGGKCVEKHNSYSCDCTKSPYEGPFCQ). In terms of domain architecture, Laminin G-like 4 spans 1019-1200 (PVSKNTSTSS…VQGSLREFSC (182 aa)). Residues 1239-1259 (AVIGGVIAVVTFITFCVIGIM) traverse the membrane as a helical segment. Residues 1260 to 1307 (TRFLYQHKQSHCTSQKKEKEYSENLDSSFRHDIDLQSTTSKCKREYFI) are Cytoplasmic-facing.

Belongs to the neurexin family.

It localises to the membrane. Functionally, may play a role in the correct development and proper functioning of the peripheral and central nervous system and be involved in cell adhesion and intercellular communication. In Rattus norvegicus (Rat), this protein is Contactin-associated protein like 5-3 (Cntnap5c).